A 181-amino-acid chain; its full sequence is Oligoribonuclease (181 aa).

An Exonuclease domain is found at 8-171 (LIWIDLEMTG…DDIRESVAEL (164 aa)). Tyrosine 129 is an active-site residue.

It belongs to the oligoribonuclease family. As to quaternary structure, homodimer.

The protein localises to the cytoplasm. Its function is as follows. 3'-to-5' exoribonuclease specific for small oligoribonucleotides. This is Oligoribonuclease from Escherichia coli O139:H28 (strain E24377A / ETEC).